The following is a 307-amino-acid chain: Plastid division protein PDV2 (307 aa).

At methionine 1 the chain carries N-acetylmethionine. Topologically, residues methionine 1–arginine 213 are cytoplasmic. The tract at residues serine 28–glutamate 66 is disordered. Basic and acidic residues predominate over residues glutamate 46–aspartate 61. Serine 50 is modified (phosphoserine). The stretch at leucine 76–glutamate 103 forms a coiled coil. Residues histidine 174–glycine 206 form a disordered region. The chain crosses the membrane as a helical span at residues phenylalanine 214–alanine 234. The Chloroplast intermembrane portion of the chain corresponds to serine 235–glycine 307. Positions serine 235 to glycine 307 are ARC6 binding.

As to quaternary structure, interacts (via C-terminus) with ARC6 (via C-terminus) in the chloroplast intermembrane space; this interaction induces ARC6 homodimerization and leads to the formation of a heterotetramer containing two ARC6 and two PDV2 subunits. Interacts with ARC5/DRP5B. Mostly expressed in young leaves.

The protein resides in the plastid. It is found in the chloroplast outer membrane. In terms of biological role, component of the plastid division machinery consisting in a binary fission accomplished by the simultaneous constriction of the FtsZ ring on the stromal side of the inner envelope membrane, and the ARC5/DRP5B ring on the cytosolic side of the outer envelope membrane. Positive factor of chloroplast division required, with a dosage effect, to mediate the recruitment and dimerization of ARC5/DRP5B at the midplastid constriction site in the cytoplasm at plastid outer envelope membranes (OEMs). Prevents ARC5/DRP5B GTPase acrivity. Relays plastid division site position between stroma and outer surface via interactions with the cytoplasmic ARC5/DRP5B and the inner membrane ARC6 that recruits stromal FtsZ ring. Binding to phosphatidylinositol 4-phosphate (PI4P) modulates negatively chloroplast division. This is Plastid division protein PDV2 from Arabidopsis thaliana (Mouse-ear cress).